The following is a 637-amino-acid chain: Chaperone protein HtpG (637 aa).

An a; substrate-binding region spans residues 1–338 (MMELKMHNVK…SPDLPLNISR (338 aa)). The segment at 339–558 (ETLQNNRVVE…EGAMDLRMER (220 aa)) is b. The disordered stretch occupies residues 493-512 (KFSPEEKDKENKSDEERAEG). The c stretch occupies residues 559–637 (FLREQNQLNY…LNNLLGKVII (79 aa)).

Belongs to the heat shock protein 90 family. As to quaternary structure, homodimer.

It localises to the cytoplasm. Its function is as follows. Molecular chaperone. Has ATPase activity. This is Chaperone protein HtpG from Wolbachia sp. subsp. Brugia malayi (strain TRS).